Reading from the N-terminus, the 290-residue chain is Signal peptidase I (290 aa).

Residues 1–13 lie on the Cytoplasmic side of the membrane; that stretch reads MKFLRSVYAFCSS. Residues 14–34 form a helical membrane-spanning segment; it reads WVGTIVIVLLVIFFIAQAFII. The Extracellular segment spans residues 35-290; it reads PSRSMVGTLY…KIIKKENATH (256 aa). Active-site residues include serine 38 and lysine 106.

It belongs to the peptidase S26 family.

Its subcellular location is the cell membrane. The enzyme catalyses Cleavage of hydrophobic, N-terminal signal or leader sequences from secreted and periplasmic proteins.. This chain is Signal peptidase I (lepB), found in Helicobacter pylori (strain ATCC 700392 / 26695) (Campylobacter pylori).